The sequence spans 443 residues: Adenylyltransferase and sulfurtransferase UBA4 (443 aa).

ATP contacts are provided by residues Gly-83, Asp-104, 111–115 (SNLHR), Lys-128, and 172–173 (DT). Cys-214 and Cys-217 together coordinate Zn(2+). The active-site Glycyl thioester intermediate; for adenylyltransferase activity is Cys-231. Residues Cys-292 and Cys-295 each contribute to the Zn(2+) site. The Rhodanese domain occupies 343–441 (QSKAPVLLDV…WSDIVNPKFP (99 aa)). Cys-400 (cysteine persulfide intermediate; for sulfurtransferase activity) is an active-site residue.

The protein in the N-terminal section; belongs to the HesA/MoeB/ThiF family. UBA4 subfamily. It depends on Zn(2+) as a cofactor.

The protein localises to the cytoplasm. It is found in the cytosol. The protein operates within tRNA modification; 5-methoxycarbonylmethyl-2-thiouridine-tRNA biosynthesis. Functionally, plays a central role in 2-thiolation of mcm(5)S(2)U at tRNA wobble positions of cytosolic tRNA(Lys), tRNA(Glu) and tRNA(Gln). Acts by mediating the C-terminal thiocarboxylation of sulfur carrier URM1. Its N-terminus first activates URM1 as acyl-adenylate (-COAMP), then the persulfide sulfur on the catalytic cysteine is transferred to URM1 to form thiocarboxylation (-COSH) of its C-terminus. The reaction probably involves hydrogen sulfide that is generated from the persulfide intermediate and that acts as a nucleophile towards URM1. Subsequently, a transient disulfide bond is formed. Does not use thiosulfate as sulfur donor; NFS1 probably acting as a sulfur donor for thiocarboxylation reactions. Prior mcm(5) tRNA modification by the elongator complex is required for 2-thiolation. May also be involved in protein urmylation. In Scheffersomyces stipitis (strain ATCC 58785 / CBS 6054 / NBRC 10063 / NRRL Y-11545) (Yeast), this protein is Adenylyltransferase and sulfurtransferase UBA4.